The primary structure comprises 308 residues: Aspartate carbamoyltransferase catalytic subunit (308 aa).

Residues Arg-58 and Thr-59 each contribute to the carbamoyl phosphate site. Residue Lys-86 participates in L-aspartate binding. Residues Arg-108, His-136, and Gln-139 each contribute to the carbamoyl phosphate site. The L-aspartate site is built by Arg-169 and Arg-227. Carbamoyl phosphate-binding residues include Gly-268 and Pro-269.

This sequence belongs to the aspartate/ornithine carbamoyltransferase superfamily. ATCase family. As to quaternary structure, heterododecamer (2C3:3R2) of six catalytic PyrB chains organized as two trimers (C3), and six regulatory PyrI chains organized as three dimers (R2).

The catalysed reaction is carbamoyl phosphate + L-aspartate = N-carbamoyl-L-aspartate + phosphate + H(+). It participates in pyrimidine metabolism; UMP biosynthesis via de novo pathway; (S)-dihydroorotate from bicarbonate: step 2/3. Its function is as follows. Catalyzes the condensation of carbamoyl phosphate and aspartate to form carbamoyl aspartate and inorganic phosphate, the committed step in the de novo pyrimidine nucleotide biosynthesis pathway. This is Aspartate carbamoyltransferase catalytic subunit from Chloroflexus aurantiacus (strain ATCC 29366 / DSM 635 / J-10-fl).